Consider the following 169-residue polypeptide: S-ribosylhomocysteine lyase (169 aa).

Fe cation contacts are provided by histidine 54, histidine 58, and cysteine 128.

It belongs to the LuxS family. In terms of assembly, homodimer. Fe cation serves as cofactor.

The catalysed reaction is S-(5-deoxy-D-ribos-5-yl)-L-homocysteine = (S)-4,5-dihydroxypentane-2,3-dione + L-homocysteine. Involved in the synthesis of autoinducer 2 (AI-2) which is secreted by bacteria and is used to communicate both the cell density and the metabolic potential of the environment. The regulation of gene expression in response to changes in cell density is called quorum sensing. Catalyzes the transformation of S-ribosylhomocysteine (RHC) to homocysteine (HC) and 4,5-dihydroxy-2,3-pentadione (DPD). This chain is S-ribosylhomocysteine lyase, found in Shewanella halifaxensis (strain HAW-EB4).